An 816-amino-acid chain; its full sequence is Lon protease (816 aa).

In terms of domain architecture, Lon N-terminal spans 27-221 (LPLLPIRDVV…KVNDLLAREH (195 aa)). 372–379 (GPPGVGKT) is an ATP binding site. A Lon proteolytic domain is found at 608 to 789 (KNEVGVVNGL…DEVLKLALEK (182 aa)). Catalysis depends on residues Ser-695 and Lys-738. Residues 795–816 (PKGKAKPATPKVVVRPSKEISA) are disordered. Positions 800-809 (KPATPKVVVR) are enriched in low complexity.

It belongs to the peptidase S16 family. As to quaternary structure, homohexamer. Organized in a ring with a central cavity.

It is found in the cytoplasm. It carries out the reaction Hydrolysis of proteins in presence of ATP.. Its function is as follows. ATP-dependent serine protease that mediates the selective degradation of mutant and abnormal proteins as well as certain short-lived regulatory proteins. Required for cellular homeostasis and for survival from DNA damage and developmental changes induced by stress. Degrades polypeptides processively to yield small peptide fragments that are 5 to 10 amino acids long. Binds to DNA in a double-stranded, site-specific manner. The sequence is that of Lon protease from Trichlorobacter lovleyi (strain ATCC BAA-1151 / DSM 17278 / SZ) (Geobacter lovleyi).